Here is a 1051-residue protein sequence, read N- to C-terminus: Ubiquitin-activating enzyme E1 2 (1051 aa).

Positions 1 to 32 (MLPRKREIVAGEVEDLQKKTRAGEGEATREEG) are enriched in basic and acidic residues. Positions 1-42 (MLPRKREIVAGEVEDLQKKTRAGEGEATREEGDAAMAGRGNE) are disordered. 2 tandem repeats follow at residues 56–194 (GRET…GSVF) and 453–605 (GSTL…QMVI). Residues 56 to 605 (GRETMKPLFG…GAKCNTQMVI (550 aa)) form a 2 approximate repeats region. ATP is bound by residues alanine 472, aspartate 498, arginine 509, lysine 522, and 570–571 (DN). Cysteine 626 functions as the Glycyl thioester intermediate in the catalytic mechanism.

It belongs to the ubiquitin-activating E1 family. As to quaternary structure, monomer.

It carries out the reaction ATP + ubiquitin + [E1 ubiquitin-activating enzyme]-L-cysteine = AMP + diphosphate + S-ubiquitinyl-[E1 ubiquitin-activating enzyme]-L-cysteine.. It participates in protein modification; protein ubiquitination. Functionally, activates ubiquitin by first adenylating its C-terminal glycine residue with ATP, and thereafter linking this residue to the side chain of a cysteine residue in E1, yielding a ubiquitin-E1 thioester and free AMP. The sequence is that of Ubiquitin-activating enzyme E1 2 (UBA2) from Triticum aestivum (Wheat).